A 213-amino-acid polypeptide reads, in one-letter code: Protein HSH49 (213 aa).

2 consecutive RRM domains span residues 9-88 and 108-185; these read NTVY…QVTN and AKLF…YAFK.

In terms of assembly, interacts with RDS3.

The protein resides in the nucleus. In terms of biological role, possible SF3b-like factor. This Saccharomyces cerevisiae (strain ATCC 204508 / S288c) (Baker's yeast) protein is Protein HSH49 (HSH49).